Here is a 336-residue protein sequence, read N- to C-terminus: Fructose-1,6-bisphosphatase class 1 (336 aa).

Residues Glu-90, Asp-112, Leu-114, and Asp-115 each coordinate Mg(2+). Substrate contacts are provided by residues Asp-115 to Ser-118, Asn-211, and Lys-277. Glu-283 is a binding site for Mg(2+).

This sequence belongs to the FBPase class 1 family. As to quaternary structure, homotetramer. The cofactor is Mg(2+).

The protein localises to the cytoplasm. The enzyme catalyses beta-D-fructose 1,6-bisphosphate + H2O = beta-D-fructose 6-phosphate + phosphate. It functions in the pathway carbohydrate biosynthesis; gluconeogenesis. The protein is Fructose-1,6-bisphosphatase class 1 of Pseudomonas fluorescens (strain Pf0-1).